Reading from the N-terminus, the 420-residue chain is Structure-specific endonuclease subunit SLX1 homolog (420 aa).

In terms of domain architecture, GIY-YIG spans 19-106; sequence SSDNTYPWQN…QHPLKSRRLR (88 aa). Disordered regions lie at residues 237 to 306 and 311 to 330; these read SVEE…AAVN and DDSADDGTTDGNEDGPDDVA. Residues 247–266 show a composition bias toward low complexity; the sequence is PSSCSVPPSTGSSAAPTPGA. Over residues 279 to 301 the composition is skewed to basic and acidic residues; the sequence is VDPRLDSDDRDDNHQFESPDNHE. Over residues 311 to 327 the composition is skewed to acidic residues; sequence DDSADDGTTDGNEDGPD. An SLX1-type zinc finger spans residues 348–405; the sequence is CGHCHQSVYQELCIVCLNATCTYRAHLLCAAQAAVHPLGQSSPSETRLVPLRHSCPRC.

Belongs to the SLX1 family. As to quaternary structure, forms a heterodimer with a member of the SLX4 family. A divalent metal cation serves as cofactor.

It localises to the nucleus. Its function is as follows. Catalytic subunit of a heterodimeric structure-specific endonuclease that resolves DNA secondary structures generated during DNA repair and recombination. Has endonuclease activity towards branched DNA substrates, introducing single-strand cuts in duplex DNA close to junctions with ss-DNA. In Monosiga brevicollis (Choanoflagellate), this protein is Structure-specific endonuclease subunit SLX1 homolog.